A 611-amino-acid polypeptide reads, in one-letter code: Aspartate--tRNA(Asp/Asn) ligase (611 aa).

Position 177 (Glu-177) interacts with L-aspartate. The aspartate stretch occupies residues 201–204 (QLFK). Arg-223 serves as a coordination point for L-aspartate. ATP contacts are provided by residues 223–225 (RDE) and Gln-232. His-461 contributes to the L-aspartate binding site. Glu-499 contributes to the ATP binding site. Arg-506 is a binding site for L-aspartate. Position 551–554 (551–554 (GVDR)) interacts with ATP.

It belongs to the class-II aminoacyl-tRNA synthetase family. Type 1 subfamily. As to quaternary structure, homodimer.

It localises to the cytoplasm. It carries out the reaction tRNA(Asx) + L-aspartate + ATP = L-aspartyl-tRNA(Asx) + AMP + diphosphate. Aspartyl-tRNA synthetase with relaxed tRNA specificity since it is able to aspartylate not only its cognate tRNA(Asp) but also tRNA(Asn). Reaction proceeds in two steps: L-aspartate is first activated by ATP to form Asp-AMP and then transferred to the acceptor end of tRNA(Asp/Asn). The chain is Aspartate--tRNA(Asp/Asn) ligase from Synechococcus sp. (strain WH7803).